A 483-amino-acid chain; its full sequence is UDP-glycosyltransferase 85C1 (483 aa).

UDP-alpha-D-glucose is bound by residues serine 304, 360-361 (WC), 378-386 (HCGWGSIIE), and 400-403 (IGDQ).

The protein belongs to the UDP-glycosyltransferase family.

Its function is as follows. May glycosylate diterpenes or flavonols in leaves. This is UDP-glycosyltransferase 85C1 from Stevia rebaudiana (Stevia).